The following is a 168-amino-acid chain: RNA annealing protein YRA2 (168 aa).

Residues 40–114 form the RRM domain; it reads FRLKITNIGL…KSIQVTLLDQ (75 aa). A disordered region spans residues 113 to 152; sequence DQQKRKRDADQERRKLRHGPRGGYGSHYTKSQKPIEQRNK.

Belongs to the YRA1 family. In terms of assembly, associates with mRNPs.

It localises to the nucleus. Its function is as follows. Involved in export of poly(A) mRNAs from the nucleus. Recruited to the coding sequences as well as poly-A sites of active genes. In Candida glabrata (strain ATCC 2001 / BCRC 20586 / JCM 3761 / NBRC 0622 / NRRL Y-65 / CBS 138) (Yeast), this protein is RNA annealing protein YRA2 (YRA2).